Consider the following 940-residue polypeptide: UvrABC system protein A (940 aa).

31–38 (GLSGSGKS) is an ATP binding site. Residues 253–280 (CPICGYSMRELEPRLFSFNNPAGACPTC) form a C4-type zinc finger. ABC transporter domains lie at 310–587 (WDRR…PESL) and 607–937 (ANPE…RFLK). 640-647 (GVSGSGKS) is a binding site for ATP. The C4-type zinc-finger motif lies at 740-766 (CEACQGDGVIKVEMHFLPDIYVPCDQC).

This sequence belongs to the ABC transporter superfamily. UvrA family. As to quaternary structure, forms a heterotetramer with UvrB during the search for lesions.

The protein localises to the cytoplasm. The UvrABC repair system catalyzes the recognition and processing of DNA lesions. UvrA is an ATPase and a DNA-binding protein. A damage recognition complex composed of 2 UvrA and 2 UvrB subunits scans DNA for abnormalities. When the presence of a lesion has been verified by UvrB, the UvrA molecules dissociate. Functionally, plays a role in recovery after DNA ADP-ribosylation. This Escherichia coli O127:H6 (strain E2348/69 / EPEC) protein is UvrABC system protein A.